Consider the following 392-residue polypeptide: Succinyl-diaminopimelate desuccinylase (392 aa).

Position 71 (histidine 71) interacts with Zn(2+). The active site involves aspartate 73. Aspartate 102 is a Zn(2+) binding site. The active-site Proton acceptor is glutamate 144. Zn(2+)-binding residues include glutamate 145, glutamate 173, and histidine 362.

Belongs to the peptidase M20A family. DapE subfamily. In terms of assembly, homodimer. Requires Zn(2+) as cofactor. The cofactor is Co(2+).

The catalysed reaction is N-succinyl-(2S,6S)-2,6-diaminopimelate + H2O = (2S,6S)-2,6-diaminopimelate + succinate. It functions in the pathway amino-acid biosynthesis; L-lysine biosynthesis via DAP pathway; LL-2,6-diaminopimelate from (S)-tetrahydrodipicolinate (succinylase route): step 3/3. Catalyzes the hydrolysis of N-succinyl-L,L-diaminopimelic acid (SDAP), forming succinate and LL-2,6-diaminopimelate (DAP), an intermediate involved in the bacterial biosynthesis of lysine and meso-diaminopimelic acid, an essential component of bacterial cell walls. This is Succinyl-diaminopimelate desuccinylase from Rhodospirillum rubrum (strain ATCC 11170 / ATH 1.1.1 / DSM 467 / LMG 4362 / NCIMB 8255 / S1).